A 210-amino-acid polypeptide reads, in one-letter code: Ribonuclease HII (210 aa).

An RNase H type-2 domain is found at 17–206 (DIICGVDEAG…VRALLGGVTP (190 aa)). A divalent metal cation contacts are provided by Asp23, Glu24, and Asp115.

This sequence belongs to the RNase HII family. Mn(2+) is required as a cofactor. It depends on Mg(2+) as a cofactor.

Its subcellular location is the cytoplasm. The enzyme catalyses Endonucleolytic cleavage to 5'-phosphomonoester.. Endonuclease that specifically degrades the RNA of RNA-DNA hybrids. The protein is Ribonuclease HII of Janthinobacterium sp. (strain Marseille) (Minibacterium massiliensis).